The chain runs to 329 residues: DNA-directed RNA polymerase subunit alpha (329 aa).

Positions 1-231 (MQNSLLKPKA…EQLAVFAQLE (231 aa)) are alpha N-terminal domain (alpha-NTD). Positions 249–329 (FDPILLRPVD…SWPPAALEKR (81 aa)) are alpha C-terminal domain (alpha-CTD).

The protein belongs to the RNA polymerase alpha chain family. As to quaternary structure, homodimer. The RNAP catalytic core consists of 2 alpha, 1 beta, 1 beta' and 1 omega subunit. When a sigma factor is associated with the core the holoenzyme is formed, which can initiate transcription.

The enzyme catalyses RNA(n) + a ribonucleoside 5'-triphosphate = RNA(n+1) + diphosphate. DNA-dependent RNA polymerase catalyzes the transcription of DNA into RNA using the four ribonucleoside triphosphates as substrates. The protein is DNA-directed RNA polymerase subunit alpha of Albidiferax ferrireducens (strain ATCC BAA-621 / DSM 15236 / T118) (Rhodoferax ferrireducens).